We begin with the raw amino-acid sequence, 469 residues long: MTSDGSFLMRREALQRVSPDLLADIVTSACDIALVVSPGRVVESVMVNPQFGSAERFAAWQGARLSQLFSPESAQKLENRLADGPEPGRSLQLELTHAADAFTLPVRYTITRSGEDGTLLLIGRDMQPLAEVQQQLVKAQLALERDYEAQREIETRYRVLLEAHPAPLLIVSMSTGRIADLNLAAAAMIGATRAELIDAPVGQELDGRRRGEFLENLAKIAGSDPLGAVELTIRRSRRKVTVTATLFRAAGDRLLLCRLGEAEARRTRVDDTVELSERLFLKGIDAMVFLDADGTIRAANDAFLYLTDAGSAALVQGRSFADFLSRGAVDLNVLLDNVKRIGHLRHYVTRLNTDFSGQVTVELSATLFHDRATPTIALVIRDSNLADATRIMPGMASNEGLRNVMQMVGYATLRDIVSETTEIIEKMCIETALELTGNNRVAAAELLSLSRQSLYVKLRKFGLLSKDAE.

The PAS domain maps to 153–225 (IETRYRVLLE…NLAKIAGSDP (73 aa)).

It functions in the pathway carotenoid biosynthesis; spheroidene biosynthesis. The sequence is that of Protein CrtJ (crtJ) from Rhodobacter capsulatus (Rhodopseudomonas capsulata).